The following is a 439-amino-acid chain: tRNA modification GTPase MnmE (439 aa).

Positions 24, 81, and 121 each coordinate (6S)-5-formyl-5,6,7,8-tetrahydrofolate. The TrmE-type G domain maps to 218–363 (GFKVVIAGAP…LRRLIGDIVE (146 aa)). Asn-228 contacts K(+). GTP contacts are provided by residues 228–233 (NAGKSS), 247–253 (TEIAGTT), and 272–275 (DTAG). Mg(2+) is bound at residue Ser-232. K(+) contacts are provided by Thr-247, Ile-249, and Thr-252. Residue Thr-253 coordinates Mg(2+). Lys-439 is a binding site for (6S)-5-formyl-5,6,7,8-tetrahydrofolate.

Belongs to the TRAFAC class TrmE-Era-EngA-EngB-Septin-like GTPase superfamily. TrmE GTPase family. Homodimer. Heterotetramer of two MnmE and two MnmG subunits. It depends on K(+) as a cofactor.

It is found in the cytoplasm. Functionally, exhibits a very high intrinsic GTPase hydrolysis rate. Involved in the addition of a carboxymethylaminomethyl (cmnm) group at the wobble position (U34) of certain tRNAs, forming tRNA-cmnm(5)s(2)U34. The polypeptide is tRNA modification GTPase MnmE (Rhizobium johnstonii (strain DSM 114642 / LMG 32736 / 3841) (Rhizobium leguminosarum bv. viciae)).